Consider the following 226-residue polypeptide: Protein YOP1 homolog (226 aa).

The interval 1 to 25 is disordered; that stretch reads MRMSKLYKNKEKENEKPSNEPPIKQ. The Cytoplasmic segment spans residues 1–72; the sequence is MRMSKLYKNK…IEFGYKLGIK (72 aa). A compositionally biased stretch (basic and acidic residues) spans 8–18; sequence KNKEKENEKPS. The helical transmembrane segment at 73–92 threads the bilayer; it reads PSYIVVFGGSALFISLVLGW. At 93 to 94 the chain is on the lumenal side; it reads GA. Residues 95 to 113 traverse the membrane as a helical segment; that stretch reads ALICNLVGFAYPAYQSFKA. Residues 114–123 are Cytoplasmic-facing; it reads VESQGHAETK. Residues 124-140 form a helical membrane-spanning segment; that stretch reads LWLTYWVVFSLFFFIEY. Residues 141–143 lie on the Lumenal side of the membrane; it reads LID. Residues 144-162 form a helical membrane-spanning segment; that stretch reads IILFWIPFYYVIKLLFLLY. The Cytoplasmic portion of the chain corresponds to 163-226; sequence LYMPQVRGAE…VQEGVRRRNV (64 aa).

Belongs to the DP1 family. In terms of assembly, may form oligomers.

It is found in the endoplasmic reticulum membrane. Functionally, required to generate and maintain the structure of the tubular endoplasmic reticulum network and the digestive (food) vacuole. Induces high curvature in membranes and causes membrane tubule formation. This chain is Protein YOP1 homolog, found in Plasmodium berghei (strain Anka).